The sequence spans 448 residues: MGVKTFTHNSPGHSQEMLGKLNMLRNDGHFCDITIRVQDKIFRAHKVVLAACSEFFRTKLVGQAEDSSQCVLDLHHVTVTGFTPLLEYAYTATLSINTENIIDVLAAASYMQMFSVASTCSEFMKSSILWNTQQEKILDTGQENPVNCNNFRDGSLSPVSSECSVVERTIPICRESRRKRKSYIVMSPESPLKCNTQTSSPQVLNPTPSYAEARNQSVDSSHAFPWTFPFGIDRRIQSEKVKQIESRTLELPGPSEVARRVTDYVACESTKVSSPLVMEDDVRVKVERLSDEEVHEEVSQPVSASQSSMSDQQTVPGSEQVQEDLLISPQSSSIGSIDEGVSEGLPTLQSTASTSVHADDDDRLENVQYPYQLYLAPTTSSTERPSPNGPDRPFQCPTCGVRFTRIQNLKQHMLIHSGIKPFQCDRCGKKFTRAYSLKMHRLKHEAIS.

The region spanning 31–98 is the BTB domain; it reads CDITIRVQDK…AYTATLSINT (68 aa). Positions 289 to 298 are enriched in basic and acidic residues; it reads LSDEEVHEEV. Residues 289–320 form a disordered region; that stretch reads LSDEEVHEEVSQPVSASQSSMSDQQTVPGSEQ. The span at 299-313 shows a compositional bias: low complexity; that stretch reads SQPVSASQSSMSDQQ. 2 consecutive C2H2-type zinc fingers follow at residues 394–416 and 422–444; these read FQCP…MLIH and FQCD…RLKH.

The protein localises to the nucleus. This is Zinc finger and BTB domain-containing protein 44 (zbtb44) from Xenopus tropicalis (Western clawed frog).